The sequence spans 466 residues: Oxysterol-binding protein 4 (466 aa).

Residues 1–12 are compositionally biased toward polar residues; that stretch reads MEIGTSSTTNNI. The segment at 1-67 is disordered; that stretch reads MEIGTSSTTN…STSPPSPPIE (67 aa). Residues 24–45 show a composition bias toward low complexity; that stretch reads NNNNHNNNSSNNSSNNNSISSS. The span at 46-60 shows a compositional bias: polar residues; sequence PTDSSQLMNGEQSTS.

The protein belongs to the OSBP family.

This Dictyostelium discoideum (Social amoeba) protein is Oxysterol-binding protein 4 (osbD).